The sequence spans 99 residues: Ragulator complex protein LAMTOR4 (99 aa).

At Met-1 the chain carries N-acetylmethionine. Position 2 is an N-acetylthreonine; in Ragulator complex protein LAMTOR4, N-terminally processed (Thr-2). Ser-67 carries the post-translational modification Phosphoserine; by PKA.

The protein belongs to the LAMTOR4 family. As to quaternary structure, part of the Ragulator complex composed of LAMTOR1, LAMTOR2, LAMTOR3, LAMTOR4 and LAMTOR5. LAMTOR4 and LAMTOR5 form a heterodimer that interacts, through LAMTOR1, with a LAMTOR2, LAMTOR3 heterodimer. The Ragulator complex interacts with both the mTORC1 complex and heterodimers constituted of the Rag GTPases RagA/RRAGA, RagB/RRAGB, RagC/RRAGC and RagD/RRAGD; regulated by amino acid availability. The Ragulator complex interacts with SLC38A9; the probable amino acid sensor. Component of the lysosomal folliculin complex (LFC), composed of FLCN, FNIP1 (or FNIP2), RagA/RRAGA or RagB/RRAGB GDP-bound, RagC/RRAGC or RagD/RRAGD GTP-bound, and Ragulator. In terms of processing, phosphorylation at Ser-67 by PKA inhibits Ragulator complex assembly.

The protein localises to the lysosome. In terms of biological role, as part of the Ragulator complex it is involved in amino acid sensing and activation of mTORC1, a signaling complex promoting cell growth in response to growth factors, energy levels, and amino acids. Activated by amino acids through a mechanism involving the lysosomal V-ATPase, the Ragulator plays a dual role for the small GTPases Rag (RagA/RRAGA, RagB/RRAGB, RagC/RRAGC and/or RagD/RRAGD): it (1) acts as a guanine nucleotide exchange factor (GEF), activating the small GTPases Rag and (2) mediates recruitment of Rag GTPases to the lysosome membrane. Activated Ragulator and Rag GTPases function as a scaffold recruiting mTORC1 to lysosomes where it is in turn activated. In Homo sapiens (Human), this protein is Ragulator complex protein LAMTOR4.